We begin with the raw amino-acid sequence, 120 residues long: U13-lycotoxin-Ls1d (120 aa).

Positions 1 to 16 (MKILFVLISILYAVYC) are cleaved as a signal peptide. A propeptide spanning residues 17 to 54 (FSSEEDVDSAYLANELEPVEDINSEQYAALEPKEEQER) is cleaved from the precursor. Disulfide bonds link cysteine 56-cysteine 70, cysteine 63-cysteine 76, cysteine 69-cysteine 87, and cysteine 78-cysteine 85. An Agouti domain is found at 56–95 (CADMGQDCKDDCDCCLNIATCNCRFGRYFCSCTFGDYQTC).

The protein belongs to the neurotoxin 05 (agouti) family. In terms of processing, contains 6 disulfide bonds. Expressed by the venom gland.

The protein resides in the secreted. The polypeptide is U13-lycotoxin-Ls1d (Lycosa singoriensis (Wolf spider)).